We begin with the raw amino-acid sequence, 356 residues long: DNA-directed RNA polymerase subunit alpha (356 aa).

Residues 1–230 (MNLHRISSEP…DLLKPLLKVE (230 aa)) are alpha N-terminal domain (alpha-NTD). The tract at residues 267–356 (IDQPLLPADS…IRKSYGHILG (90 aa)) is alpha C-terminal domain (alpha-CTD).

It belongs to the RNA polymerase alpha chain family. In plastids the minimal PEP RNA polymerase catalytic core is composed of four subunits: alpha, beta, beta', and beta''. When a (nuclear-encoded) sigma factor is associated with the core the holoenzyme is formed, which can initiate transcription.

The protein localises to the plastid. Its subcellular location is the chloroplast. The enzyme catalyses RNA(n) + a ribonucleoside 5'-triphosphate = RNA(n+1) + diphosphate. DNA-dependent RNA polymerase catalyzes the transcription of DNA into RNA using the four ribonucleoside triphosphates as substrates. In Zygnema circumcarinatum (Green alga), this protein is DNA-directed RNA polymerase subunit alpha.